A 550-amino-acid polypeptide reads, in one-letter code: Cochlin (550 aa).

The first 15 residues, 1–15 (MPAAWMPVLRLGAYA), serve as a signal peptide directing secretion. One can recognise an LCCL domain in the interval 28-121 (VPIAITCFTR…QTLARWSASF (94 aa)). Intrachain disulfides connect C34-C50 and C54-C74. N-linked (GlcNAc...) asparagine glycosylation occurs at N100. A compositionally biased stretch (polar residues) spans 126 to 139 (GKSSTQEATGQAVS). The disordered stretch occupies residues 126–158 (GKSSTQEATGQAVSTARPPTGKRLKKTPEKKTG). 2 VWFA domains span residues 165 to 350 (DIAF…VQKL) and 367 to 537 (NIAF…VSDI).

In terms of assembly, monomer. May form homodimer. Interacts with type II collagen. Interacts with ANXA2. Interacts with SLC44A2. N-glycosylated.

Its subcellular location is the secreted. It localises to the extracellular space. It is found in the extracellular matrix. In terms of biological role, plays a role in the control of cell shape and motility in the trabecular meshwork. The polypeptide is Cochlin (COCH) (Cavia porcellus (Guinea pig)).